Consider the following 867-residue polypeptide: Rifampicin phosphotransferase (867 aa).

The interval Met1–Thr314 is ATP-binding. Residues Lys22, Arg117, Gly132, Thr136, Gln183, Glu297, Gln309, and Arg311 each contribute to the ATP site. Residues Asn327–Glu754 are rifampicin-binding. Positions 336 and 351 each coordinate rifampicin. The segment at Gly767–Ile865 is swivel phosphohistidine. His825 acts as the Tele-phosphohistidine intermediate in catalysis.

Belongs to the rifampicin phosphotransferase family.

It carries out the reaction rifampicin + ATP + H2O = 21-phosphorifampicin + AMP + phosphate + 2 H(+). In terms of biological role, catalyzes the phosphorylation of rifampicin, also known as rifampin (RIF), leading to its inactivation. Confers high level resistance to a variety of clinically used rifamycin antibiotics. Does not show phosphoenolpyruvate (PEP) synthase activity. In Listeria monocytogenes serotype 4b (strain F2365), this protein is Rifampicin phosphotransferase.